The chain runs to 261 residues: Cytosolic Fe-S cluster assembly factor Nubp2 homolog (261 aa).

14–21 (GKGGVGKS) is a binding site for ATP. Positions 188 and 191 each coordinate [4Fe-4S] cluster.

Belongs to the Mrp/NBP35 ATP-binding proteins family. NUBP2/CFD1 subfamily. As to quaternary structure, heterotetramer of 2 Nubp1 and 2 Nubp2 chains. It depends on [4Fe-4S] cluster as a cofactor.

It localises to the cytoplasm. In terms of biological role, component of the cytosolic iron-sulfur (Fe/S) protein assembly (CIA) machinery. Required for maturation of extramitochondrial Fe-S proteins. The Nubp1-Nubp2 heterotetramer forms a Fe-S scaffold complex, mediating the de novo assembly of an Fe-S cluster and its transfer to target apoproteins. The chain is Cytosolic Fe-S cluster assembly factor Nubp2 homolog from Drosophila willistoni (Fruit fly).